A 560-amino-acid chain; its full sequence is Dihydroxy-acid dehydratase (560 aa).

Asp-78 is a binding site for Mg(2+). Cys-119 contacts [2Fe-2S] cluster. Mg(2+)-binding residues include Asp-120 and Lys-121. Residue Lys-121 is modified to N6-carboxylysine. Residue Cys-192 participates in [2Fe-2S] cluster binding. Residue Glu-446 participates in Mg(2+) binding. The active-site Proton acceptor is the Ser-472.

It belongs to the IlvD/Edd family. In terms of assembly, homodimer. It depends on [2Fe-2S] cluster as a cofactor. The cofactor is Mg(2+).

The enzyme catalyses (2R)-2,3-dihydroxy-3-methylbutanoate = 3-methyl-2-oxobutanoate + H2O. It carries out the reaction (2R,3R)-2,3-dihydroxy-3-methylpentanoate = (S)-3-methyl-2-oxopentanoate + H2O. It participates in amino-acid biosynthesis; L-isoleucine biosynthesis; L-isoleucine from 2-oxobutanoate: step 3/4. The protein operates within amino-acid biosynthesis; L-valine biosynthesis; L-valine from pyruvate: step 3/4. Its function is as follows. Functions in the biosynthesis of branched-chain amino acids. Catalyzes the dehydration of (2R,3R)-2,3-dihydroxy-3-methylpentanoate (2,3-dihydroxy-3-methylvalerate) into 2-oxo-3-methylpentanoate (2-oxo-3-methylvalerate) and of (2R)-2,3-dihydroxy-3-methylbutanoate (2,3-dihydroxyisovalerate) into 2-oxo-3-methylbutanoate (2-oxoisovalerate), the penultimate precursor to L-isoleucine and L-valine, respectively. The polypeptide is Dihydroxy-acid dehydratase (Anaeromyxobacter sp. (strain K)).